An 873-amino-acid chain; its full sequence is Protein translocase subunit SecA (873 aa).

ATP contacts are provided by residues Gln85, 103–107 (GEGKT), and Asp492. Positions 835–856 (RYAEEEGKQPIRKENQIGRNDD) are enriched in basic and acidic residues. Positions 835-873 (RYAEEEGKQPIRKENQIGRNDDCPCGSGKKYKKCCGKNA) are disordered. Residues Cys857, Cys859, Cys868, and Cys869 each coordinate Zn(2+). Residues 863–873 (KKYKKCCGKNA) show a composition bias toward basic residues.

This sequence belongs to the SecA family. As to quaternary structure, monomer and homodimer. Part of the essential Sec protein translocation apparatus which comprises SecA, SecYEG and auxiliary proteins SecDF. Other proteins may also be involved. Requires Zn(2+) as cofactor.

The protein localises to the cell membrane. The protein resides in the cytoplasm. The enzyme catalyses ATP + H2O + cellular proteinSide 1 = ADP + phosphate + cellular proteinSide 2.. In terms of biological role, part of the Sec protein translocase complex. Interacts with the SecYEG preprotein conducting channel. Has a central role in coupling the hydrolysis of ATP to the transfer of proteins into and across the cell membrane, serving as an ATP-driven molecular motor driving the stepwise translocation of polypeptide chains across the membrane. This is Protein translocase subunit SecA from Desulforamulus reducens (strain ATCC BAA-1160 / DSM 100696 / MI-1) (Desulfotomaculum reducens).